A 317-amino-acid chain; its full sequence is Nuclear distribution protein nudE homolog (317 aa).

Residues 29 to 180 (TDVKQEYDEF…LKQELNVKSR (152 aa)) are a coiled coil. Positions 186–205 (NGTSVPTANDTNTVNSSMNS) are disordered.

This sequence belongs to the nudE family.

The protein resides in the cytoplasm. The protein localises to the cytoskeleton. It is found in the microtubule organizing center. Its subcellular location is the centrosome. It localises to the spindle. Functionally, chaperone protein with functions in nuclear localization. Required for centrosome duplication and formation and function of the mitotic spindle. In postmitotic neurons, acts with nudC downstream of dar1 to ensure correct positioning of the nuclei in primary dendrites and as a consequence, is required for determining multipolar neuron morphology. This Drosophila melanogaster (Fruit fly) protein is Nuclear distribution protein nudE homolog.